The following is a 221-amino-acid chain: Interleukin-12 subunit alpha (221 aa).

Positions 1–25 are cleaved as a signal peptide; that stretch reads MCPLRSLLLISTLVLLHHLPHLSLG. Intrachain disulfides connect Cys-39–Cys-112, Cys-66–Cys-198, and Cys-87–Cys-125. The N-linked (GlcNAc...) asparagine glycan is linked to Asn-95.

This sequence belongs to the IL-6 superfamily. As to quaternary structure, heterodimer with IL12B; disulfide-linked. This heterodimer is known as interleukin IL-12. Heterodimer with EBI3/IL27B; not disulfide-linked. This heterodimer is known as interleukin IL-35. Interacts with NBR1; this interaction promotes IL-12 secretion.

The protein localises to the secreted. In terms of biological role, heterodimerizes with IL12B to form the IL-12 cytokine or with EBI3/IL27B to form the IL-35 cytokine. IL-12 is primarily produced by professional antigen-presenting cells (APCs) such as B-cells and dendritic cells (DCs) as well as macrophages and granulocytes and regulates T-cell and natural killer-cell responses, induces the production of interferon-gamma (IFN-gamma), favors the differentiation of T-helper 1 (Th1) cells and is an important link between innate resistance and adaptive immunity. Mechanistically, exerts its biological effects through a receptor composed of IL12R1 and IL12R2 subunits. Binding to the receptor results in the rapid tyrosine phosphorylation of a number of cellular substrates including the JAK family kinases TYK2 and JAK2. In turn, recruited STAT4 gets phosphorylated and translocates to the nucleus where it regulates cytokine/growth factor responsive genes. As part of IL-35, plays essential roles in maintaining the immune homeostasis of the liver microenvironment and also functions as an immune-suppressive cytokine. Mediates biological events through unconventional receptors composed of IL12RB2 and gp130/IL6ST heterodimers or homodimers. Signaling requires the transcription factors STAT1 and STAT4, which form a unique heterodimer that binds to distinct DNA sites. This chain is Interleukin-12 subunit alpha (IL12A), found in Bubalus carabanensis (Swamp type water buffalo).